The sequence spans 372 residues: C-X-C chemokine receptor type 5 (372 aa).

Residues 1–55 (MNYPLTLEMDLENLEDLFWELDRLDNYNDTSLVENHLCPATEGPLMASFKAVFVP) lie on the Extracellular side of the membrane. Residue Asn28 is glycosylated (N-linked (GlcNAc...) asparagine). The chain crosses the membrane as a helical span at residues 56–76 (VAYSLIFLLGVIGNVLVLVIL). Residues 77 to 88 (ERHRQTRSSTET) are Cytoplasmic-facing. The chain crosses the membrane as a helical span at residues 89–109 (FLFHLAVADLLLVFILPFAVA). At 110 to 124 (EGSVGWVLGTFLCKT) the chain is on the extracellular side. Cysteines 122 and 202 form a disulfide. The chain crosses the membrane as a helical span at residues 125–145 (VIALHKVNFYCSSLLLACIAV). Residues 146 to 167 (DRYLAIVHAVHAYRHRRLLSIH) are Cytoplasmic-facing. The chain crosses the membrane as a helical span at residues 168-188 (ITCGTIWLVGFLLALPEILFA). Residues 189-219 (KVSQGHHNNSLPRCTFSQENQAETHAWFTSR) are Extracellular-facing. An N-linked (GlcNAc...) asparagine glycan is attached at Asn196. The helical transmembrane segment at 220 to 240 (FLYHVAGFLLPMLVMGWCYVG) threads the bilayer. The Cytoplasmic segment spans residues 241–259 (VVHRLRQAQRRPQRQKAVR). The helical transmembrane segment at 260 to 280 (VAILVTSIFFLCWSPYHIVIF) threads the bilayer. Residues 281-304 (LDTLARLKAVDNTCKLNGSLPVAI) are Extracellular-facing. A helical transmembrane segment spans residues 305–325 (TMCEFLGLAHCCLNPMLYTFA). Residues 326-372 (GVKFRSDLSRLLTKLGCTGPASLCQLFPSWRRSSLSESENATSLTTF) are Cytoplasmic-facing.

Belongs to the G-protein coupled receptor 1 family. Expression in mature B-cells and Burkitt lymphoma cells.

The protein localises to the cell membrane. In terms of biological role, cytokine receptor that binds to B-lymphocyte chemoattractant (BLC). Involved in B-cell migration into B-cell follicles of spleen and Peyer patches but not into those of mesenteric or peripheral lymph nodes. May have a regulatory function in Burkitt lymphoma (BL) lymphomagenesis and/or B-cell differentiation. The sequence is that of C-X-C chemokine receptor type 5 (CXCR5) from Homo sapiens (Human).